The primary structure comprises 198 residues: Probable GTP-binding protein EngB (198 aa).

The region spanning 22 to 195 is the EngB-type G domain; the sequence is DLPEIALAGR…WKAIHKFTKT (174 aa). GTP is bound by residues 30–37, 57–61, 75–78, 142–145, and 174–176; these read GRSNVGKS, GKTQT, DVPG, TKAD, and FSS. The Mg(2+) site is built by S37 and T59.

This sequence belongs to the TRAFAC class TrmE-Era-EngA-EngB-Septin-like GTPase superfamily. EngB GTPase family. It depends on Mg(2+) as a cofactor.

Functionally, necessary for normal cell division and for the maintenance of normal septation. This is Probable GTP-binding protein EngB from Bacillus cereus (strain B4264).